The primary structure comprises 90 residues: Small ribosomal subunit protein bS16 (90 aa).

It belongs to the bacterial ribosomal protein bS16 family.

The sequence is that of Small ribosomal subunit protein bS16 from Listeria monocytogenes serotype 4b (strain F2365).